The following is a 371-amino-acid chain: Putative glutamate--cysteine ligase 2 (371 aa).

Belongs to the glutamate--cysteine ligase type 2 family. YbdK subfamily.

It catalyses the reaction L-cysteine + L-glutamate + ATP = gamma-L-glutamyl-L-cysteine + ADP + phosphate + H(+). Its function is as follows. ATP-dependent carboxylate-amine ligase which exhibits weak glutamate--cysteine ligase activity. The chain is Putative glutamate--cysteine ligase 2 from Burkholderia lata (strain ATCC 17760 / DSM 23089 / LMG 22485 / NCIMB 9086 / R18194 / 383).